The primary structure comprises 770 residues: Kinesin-like protein klpA (770 aa).

Residues 1–152 (MENVQSRMQG…GLGKRGEWDQ (152 aa)) form a disordered region. The span at 85–105 (SSTLTRSASAASRPRGPLSSS) shows a compositional bias: low complexity. Polar residues predominate over residues 106 to 119 (TSGRPKTSMSTSRR). The span at 134-152 (THQEERSYGGLGKRGEWDQ) shows a compositional bias: basic and acidic residues. Residues 175–425 (QESSGLKDAL…QELKGNIRVF (251 aa)) are a coiled coil. The 336-residue stretch at 421–756 (NIRVFCRVRP…LKFATKVHNT (336 aa)) folds into the Kinesin motor domain. 514 to 521 (GQTGSGKT) contributes to the ATP binding site.

It belongs to the TRAFAC class myosin-kinesin ATPase superfamily. Kinesin family. NCD subfamily.

The protein resides in the cytoplasm. It is found in the cytoskeleton. The sequence is that of Kinesin-like protein klpA (klpA) from Emericella nidulans (strain FGSC A4 / ATCC 38163 / CBS 112.46 / NRRL 194 / M139) (Aspergillus nidulans).